Here is a 153-residue protein sequence, read N- to C-terminus: Pheromone-binding protein Gp-9 (153 aa).

Positions 1–19 are cleaved as a signal peptide; that stretch reads MKTFVLHIFIFALVAFASA. Intrachain disulfides connect Cys-37/Cys-77, Cys-73/Cys-129, and Cys-118/Cys-138.

Belongs to the PBP/GOBP family. As to quaternary structure, homodimer.

It localises to the secreted. Its function is as follows. Colony queen number, a major feature of social organization, is associated with worker genotype for Gp-9. Colonies are headed by either a single reproductive queen (monogyne form) or multiple queens (polygyne form). Differences in worker Gp-9 genotypes between social forms may cause differences in workers' abilities to recognize queens and regulate their numbers. In Solenopsis interrupta (Fire ant), this protein is Pheromone-binding protein Gp-9.